The following is a 595-amino-acid chain: Pentatricopeptide repeat-containing protein At4g21065 (595 aa).

PPR repeat units follow at residues 84–118 (NVFI…GLVE), 120–154 (DTHT…GFGS), 155–185 (LIYV…MPEK), 186–220 (DLVA…GIKP), 221–255 (DGFT…GLTR), 256–290 (NLHS…NSVS), 291–317 (WTSL…MEST), 323–353 (CEIT…MREE), and 359–389 (RIEH…MPMQ). Positions 394-469 (IWRTLLGACT…VPGHSLVEVG (76 aa)) are type E motif. A type E(+) motif region spans residues 470-500 (NRVHEFLMGDKSHPQSDAIYAKLKEMTGRLR). Residues 501–595 (SEGYVPQISN…NGSCSCQDYW (95 aa)) are type DYW motif.

It belongs to the PPR family. PCMP-H subfamily.

This Arabidopsis thaliana (Mouse-ear cress) protein is Pentatricopeptide repeat-containing protein At4g21065 (PCMP-H28).